The chain runs to 274 residues: RNA polymerase sigma factor SigI4 (274 aa).

The short motif at 87 to 100 (EEYSVGLMAFNEAI) is the Polymerase core binding element. A DNA-binding region (H-T-H motif) is located at residues 226–245 (LSELMGLVNVHRKTVERNRK).

This sequence belongs to the sigma-70 factor family. SigI subfamily. Interacts with RsgI4.

The protein localises to the cytoplasm. With respect to regulation, negatively regulated by the anti-sigma-I factor RsgI4. Binding of the polysaccharide substrate to RsgI4 may lead to the release and activation of SigI4. In terms of biological role, sigma factors are initiation factors that promote the attachment of RNA polymerase to specific initiation sites and are then released. This sigma factor is involved in regulation of cellulosomal genes via an external polysaccharide-sensing mechanism. The protein is RNA polymerase sigma factor SigI4 of Acetivibrio thermocellus (strain ATCC 27405 / DSM 1237 / JCM 9322 / NBRC 103400 / NCIMB 10682 / NRRL B-4536 / VPI 7372) (Clostridium thermocellum).